Consider the following 365-residue polypeptide: GTPase Obg (365 aa).

The 159-residue stretch at 1–159 (MKFIDEARIE…RMLKLELKVL (159 aa)) folds into the Obg domain. The OBG-type G domain occupies 160-334 (ADVGLLGMPN…LVYAIKDHLA (175 aa)). Residues 166–173 (GMPNAGKS), 191–195 (FTTLH), 213–216 (DIPG), 284–287 (NKLD), and 315–317 (SAL) contribute to the GTP site. 2 residues coordinate Mg(2+): Ser173 and Thr193.

The protein belongs to the TRAFAC class OBG-HflX-like GTPase superfamily. OBG GTPase family. As to quaternary structure, monomer. Mg(2+) is required as a cofactor.

It localises to the cytoplasm. In terms of biological role, an essential GTPase which binds GTP, GDP and possibly (p)ppGpp with moderate affinity, with high nucleotide exchange rates and a fairly low GTP hydrolysis rate. Plays a role in control of the cell cycle, stress response, ribosome biogenesis and in those bacteria that undergo differentiation, in morphogenesis control. In Cupriavidus metallidurans (strain ATCC 43123 / DSM 2839 / NBRC 102507 / CH34) (Ralstonia metallidurans), this protein is GTPase Obg.